The sequence spans 144 residues: Superoxide dismutase [Mn] (144 aa).

Positions 1–22 (GYVNGLESAEETLAENRESGDF) are disordered. The Mn(2+) site is built by His-42, Asp-124, and His-128.

Belongs to the iron/manganese superoxide dismutase family. Requires Mn(2+) as cofactor.

It carries out the reaction 2 superoxide + 2 H(+) = H2O2 + O2. Functionally, destroys superoxide anion radicals which are normally produced within the cells and which are toxic to biological systems. The protein is Superoxide dismutase [Mn] (sod) of Haloarcula hispanica.